Consider the following 424-residue polypeptide: L-threonine:uridine-5'-aldehyde transaldolase (424 aa).

Lys235 carries the post-translational modification N6-(pyridoxal phosphate)lysine.

It belongs to the SHMT family. Pyridoxal 5'-phosphate serves as cofactor.

It carries out the reaction uridine-5'-aldehyde + L-threonine = (5'S,6'S)-C-glycyluridine + acetaldehyde. The protein operates within antibiotic biosynthesis. Its function is as follows. Transaldolase involved in the biosynthesis of the lipopeptidyl nucleoside antibiotic A-90289. Catalyzes the condensation of L-threonine and uridine-5'-aldehyde to form 5'-C-glycyluridine (GlyU). Forms (5'S,6'S)-GlyU. Has no activity with alternative amino acids, such as glycine or serine. This chain is L-threonine:uridine-5'-aldehyde transaldolase, found in Streptomyces sp.